The chain runs to 147 residues: Large ribosomal subunit protein uL11 (147 aa).

The protein belongs to the universal ribosomal protein uL11 family. In terms of assembly, part of the ribosomal stalk of the 50S ribosomal subunit. Interacts with L10 and the large rRNA to form the base of the stalk. L10 forms an elongated spine to which L12 dimers bind in a sequential fashion forming a multimeric L10(L12)X complex. One or more lysine residues are methylated.

Functionally, forms part of the ribosomal stalk which helps the ribosome interact with GTP-bound translation factors. The sequence is that of Large ribosomal subunit protein uL11 from Phocaeicola vulgatus (strain ATCC 8482 / DSM 1447 / JCM 5826 / CCUG 4940 / NBRC 14291 / NCTC 11154) (Bacteroides vulgatus).